We begin with the raw amino-acid sequence, 1010 residues long: 2-oxoglutarate dehydrogenase-like, mitochondrial (1010 aa).

The transit peptide at 1–73 (MSQLRLLPSR…RSVHKSWDSF (73 aa)) directs the protein to the mitochondrion. Residues His130, Asp143, and Asp145 each contribute to the Ca(2+) site. Arg299, Asp398, Asn431, Ile433, and Gln663 together coordinate thiamine diphosphate. Mg(2+)-binding residues include Asp398, Asn431, and Ile433.

This sequence belongs to the alpha-ketoglutarate dehydrogenase family. As to quaternary structure, the OGDHC complex comprises multiple copies of three catalytic enzyme components, the 2-oxoglutarate dehydrogenase (OGDH/E1), the dihydrolipoamide dehydrogenase (DLST/E2) and the dihydrolipoamide dehydrogenase (DLD/E3). OGDHL/E1-like isoenzyme may replace OGDH in the OGDHC complex in the brain. The presence of either ODGH/E1 or ODGHL/E1-like isoenzyme in the complex may depend on its tissular distribution. Thiamine diphosphate serves as cofactor. Mg(2+) is required as a cofactor.

Its subcellular location is the mitochondrion matrix. It catalyses the reaction N(6)-[(R)-lipoyl]-L-lysyl-[protein] + 2-oxoglutarate + H(+) = N(6)-[(R)-S(8)-succinyldihydrolipoyl]-L-lysyl-[protein] + CO2. Functionally, 2-oxoglutarate dehydrogenase (E1-like) component of the 2-oxoglutarate dehydrogenase multienzyme complex (OGDHC) which mediates the decarboxylation of alpha-ketoglutarate in the tricarboxylic acid cycle. The OGDHC complex catalyzes the overall conversion of 2-oxoglutarate to succinyl-CoA and CO(2) while reducing NAD(+) to NADH. The OGDHC complex is mainly active in the mitochondrion. Involved in the inhibition of cell proliferation and in apoptosis. In Pongo abelii (Sumatran orangutan), this protein is 2-oxoglutarate dehydrogenase-like, mitochondrial (OGDHL).